A 446-amino-acid chain; its full sequence is Serine--tRNA ligase, mitochondrial (446 aa).

Residue 251 to 253 (TAE) participates in L-serine binding. Residues 284–286 (RAE) and Val-300 each bind ATP. Glu-307 lines the L-serine pocket. An ATP-binding site is contributed by 371–374 (EISS). Thr-407 lines the L-serine pocket.

This sequence belongs to the class-II aminoacyl-tRNA synthetase family. Type-1 seryl-tRNA synthetase subfamily. As to quaternary structure, homodimer. The tRNA molecule binds across the dimer.

Its subcellular location is the mitochondrion matrix. It carries out the reaction tRNA(Ser) + L-serine + ATP = L-seryl-tRNA(Ser) + AMP + diphosphate + H(+). Functionally, catalyzes the attachment of serine to tRNA(Ser). The chain is Serine--tRNA ligase, mitochondrial (DIA4) from Saccharomyces cerevisiae (strain ATCC 204508 / S288c) (Baker's yeast).